The sequence spans 373 residues: Mannitol-1-phosphate 5-dehydrogenase (373 aa).

Position 3 to 14 (3 to 14 (ALHFGAGNIGRG)) interacts with NAD(+).

It belongs to the mannitol dehydrogenase family.

The enzyme catalyses D-mannitol 1-phosphate + NAD(+) = beta-D-fructose 6-phosphate + NADH + H(+). The polypeptide is Mannitol-1-phosphate 5-dehydrogenase (mtlD) (Bacillus subtilis (strain 168)).